The chain runs to 624 residues: ATP-dependent zinc metalloprotease FtsH (624 aa).

Over 1-7 (MPRAPFS) the chain is Cytoplasmic. The helical transmembrane segment at 8–28 (LLALVLGLAFLAWAFSLAGTV) threads the bilayer. Topologically, residues 29–103 (GAPSGTVNYT…VRVEPPQGQN (75 aa)) are periplasmic. Residues 104–124 (ALGFLWPLLLVGLLIGALYYF) form a helical membrane-spanning segment. The Cytoplasmic segment spans residues 125–624 (SRNGRAGPSD…VKPGGALGGA (500 aa)). Residues Ala159, 199 to 203 (GVGKT), and His204 each bind ATP. A Zn(2+)-binding site is contributed by His418. Glu419 is a catalytic residue. Residues His422 and Asp493 each contribute to the Zn(2+) site. Positions 595–624 (PLEAPEEAREEREPPRVVPKVKPGGALGGA) are disordered. Residues 600–609 (EEAREEREPP) are compositionally biased toward basic and acidic residues.

This sequence in the central section; belongs to the AAA ATPase family. In the C-terminal section; belongs to the peptidase M41 family. As to quaternary structure, the isolated soluble domain (residues 126-624) forms a stable hexamer in which the AAA+ domains (residues 126-400) are alternatively open or closed. Zn(2+) serves as cofactor.

It localises to the cell inner membrane. The proteolytic activity is dependent on ATP, both the ATPase and protease activities are inhibited by ADP. Its function is as follows. Acts as a processive, ATP-dependent zinc metallopeptidase for both cytoplasmic and membrane proteins. Plays a role in the quality control of integral membrane proteins. Degrades preferentially unfolded substrates in a processive, ATP-dependent manner, usually after hydrophobic residues. This Thermus thermophilus (strain ATCC 27634 / DSM 579 / HB8) protein is ATP-dependent zinc metalloprotease FtsH.